The sequence spans 701 residues: Elongation factor G (701 aa).

A tr-type G domain is found at 10–286 (NKVRNIGIMA…AVIDYLPSPL (277 aa)). Residues 19-26 (AHIDAGKT), 83-87 (DTPGH), and 137-140 (NKMD) each bind GTP.

The protein belongs to the TRAFAC class translation factor GTPase superfamily. Classic translation factor GTPase family. EF-G/EF-2 subfamily.

Its subcellular location is the cytoplasm. Its function is as follows. Catalyzes the GTP-dependent ribosomal translocation step during translation elongation. During this step, the ribosome changes from the pre-translocational (PRE) to the post-translocational (POST) state as the newly formed A-site-bound peptidyl-tRNA and P-site-bound deacylated tRNA move to the P and E sites, respectively. Catalyzes the coordinated movement of the two tRNA molecules, the mRNA and conformational changes in the ribosome. This chain is Elongation factor G, found in Mycobacteroides abscessus (strain ATCC 19977 / DSM 44196 / CCUG 20993 / CIP 104536 / JCM 13569 / NCTC 13031 / TMC 1543 / L948) (Mycobacterium abscessus).